Consider the following 292-residue polypeptide: uncharacterized protein (292 aa).

Disordered stretches follow at residues 29-50 (SEKP…LRDS) and 166-292 (VKRK…EELK). At Ser50 the chain carries Phosphoserine. Polar residues-rich tracts occupy residues 176 to 189 (NSKN…PVNN) and 208 to 217 (GSPTNFSKLI). A compositionally biased stretch (basic and acidic residues) spans 221–239 (YKDEWLQQQKADSDRRTPK). Polar residues-rich tracts occupy residues 240-250 (TSEASVSTQST) and 260-270 (DTETPQNSETP).

Post-translationally, phosphorylated upon DNA damage.

This is an uncharacterized protein from Rattus norvegicus (Rat).